The chain runs to 219 residues: Transmembrane protein 247 (219 aa).

Composition is skewed to basic and acidic residues over residues 1–10 and 29–45; these read MAAEDREMME and SKSE…ESQK. Residues 1-101 are disordered; that stretch reads MAAEDREMME…LPPTPGTERN (101 aa). Residues 121-156 adopt a coiled-coil conformation; sequence LHEKNQRQRQHEVVMEQLQRERQHEVVMEQLQQEAA. Helical transmembrane passes span 167–187 and 194–214; these read FLLP…IHII and VFFL…LCLI.

Its subcellular location is the membrane. This chain is Transmembrane protein 247 (TMEM247), found in Homo sapiens (Human).